The chain runs to 285 residues: MAAELKTITVLGAGGKMGMRISANFQKSDYQVFYCENSPRAQEQVVAAGRELSIAEQVIPESDVVILAVPDIALKAVSGIVVPQMKSNAVLLTLDPAAAYANLIAKRDDIDYAVAHPCHPSVFLDRFTPEEHADAFGGVAAPQHVAASYETGSDEQKATLARVVKVMYGPVIDVHWVTVKQLAYLEPTLVETVACMVGTLMKEALDETINTIGVPEAAAKAMLYGHIQIALAVAFRSTNPFSDACMIAIEYGKENIIKPDWKKIFDEKELDLVIAKMLKIDAIER.

NAD(+) is bound by residues 15–17, glutamate 36, and aspartate 71; that span reads GKM. Histidine 116 and glutamate 186 together coordinate Zn(2+).

Belongs to the ApnO family. Zn(2+) serves as cofactor.

The enzyme catalyses D-apionate + NAD(+) = 3-oxoisoapionate + NADH + H(+). The protein operates within carbohydrate metabolism. Its function is as follows. Involved in catabolism of D-apiose. Catalyzes the conversion of D-apionate to 3-oxo-isoapionate. The protein is D-apionate oxidoisomerase of Pectobacterium atrosepticum (strain SCRI 1043 / ATCC BAA-672) (Erwinia carotovora subsp. atroseptica).